Consider the following 681-residue polypeptide: Mitosis inhibitor nif1 (681 aa).

The interval leucine 22–glycine 43 is disordered. A compositionally biased stretch (basic and acidic residues) spans asparagine 23–lysine 37. Serine 70 is subject to Phosphoserine. Disordered stretches follow at residues threonine 80–phenylalanine 104 and tyrosine 182–glutamine 324. Residues glutamate 92 to proline 103 show a composition bias toward low complexity. Positions threonine 191 to lysine 203 are enriched in polar residues. Serine 196 is subject to Phosphoserine. The span at serine 238–leucine 278 shows a compositional bias: low complexity. Residues serine 296–threonine 306 show a composition bias toward basic and acidic residues. 2 Sel1-like repeats span residues alanine 547 to aspartate 582 and alanine 583 to isoleucine 618.

Its subcellular location is the cytoplasm. In terms of biological role, functions as a negative regulator of mitosis. It interacts with the C-terminal of nim1, thereby inhibiting its kinase activity which phosphorylates wee1. The polypeptide is Mitosis inhibitor nif1 (nif1) (Schizosaccharomyces pombe (strain 972 / ATCC 24843) (Fission yeast)).